The primary structure comprises 235 residues: Class B acid phosphatase (235 aa).

Residues 1–22 (MKNLVKLSLIAMLTAATLPAMA) form the signal peptide. Residue D67 is the Nucleophile of the active site. The Mg(2+) site is built by D67 and D69. D69 serves as the catalytic Proton donor. Substrate contacts are provided by residues 135-136 (TG) and K175. A Mg(2+)-binding site is contributed by D190.

The protein belongs to the class B bacterial acid phosphatase family. In terms of assembly, homotetramer. The cofactor is Mg(2+).

Its subcellular location is the periplasm. It catalyses the reaction a phosphate monoester + H2O = an alcohol + phosphate. Its function is as follows. Dephosphorylates several organic phosphate monoesters. Also has a phosphotransferase activity catalyzing the transfer of low-energy phosphate groups from organic phosphate monoesters to free hydroxyl groups of various organic compounds. The sequence is that of Class B acid phosphatase from Aggregatibacter actinomycetemcomitans serotype C (strain D11S-1) (Actinobacillus actinomycetemcomitans).